The following is an 83-amino-acid chain: Putative snRNP Sm-like protein (83 aa).

Residues 9–81 enclose the Sm domain; sequence KPMDVLKSAL…VIFVSPSKGD (73 aa).

The protein belongs to the snRNP Sm proteins family.

This is Putative snRNP Sm-like protein from Thermoplasma acidophilum (strain ATCC 25905 / DSM 1728 / JCM 9062 / NBRC 15155 / AMRC-C165).